A 209-amino-acid chain; its full sequence is Protein-L-isoaspartate O-methyltransferase (209 aa).

The active site involves Ser59.

The protein belongs to the methyltransferase superfamily. L-isoaspartyl/D-aspartyl protein methyltransferase family. In terms of assembly, monomer.

It is found in the cytoplasm. The catalysed reaction is [protein]-L-isoaspartate + S-adenosyl-L-methionine = [protein]-L-isoaspartate alpha-methyl ester + S-adenosyl-L-homocysteine. Its function is as follows. Catalyzes the methyl esterification of L-isoaspartyl residues in peptides and proteins that result from spontaneous decomposition of normal L-aspartyl and L-asparaginyl residues. It plays a role in the repair and/or degradation of damaged proteins. The polypeptide is Protein-L-isoaspartate O-methyltransferase (pcm) (Helicobacter pylori (strain J99 / ATCC 700824) (Campylobacter pylori J99)).